The chain runs to 556 residues: Delta-1-pyrroline-5-carboxylate dehydrogenase 12A1, mitochondrial (556 aa).

282–287 (GSSRVA) serves as a coordination point for NAD(+). The active-site Proton acceptor is the E301. C336 functions as the Nucleophile in the catalytic mechanism.

This sequence belongs to the aldehyde dehydrogenase family. In terms of tissue distribution, highly expressed in flowers. Constitutively expressed at low levels in the other tissues. Highly expressed in pollen grains and tissues undergoing cell death. Expressed in old leaves, mature siliques and developing embryos.

It is found in the mitochondrion matrix. It catalyses the reaction (S)-1-pyrroline-5-carboxylate + NAD(+) + 2 H2O = L-glutamate + NADH + H(+). It functions in the pathway amino-acid degradation; L-proline degradation into L-glutamate; L-glutamate from L-proline: step 2/2. Plays a role in the inhibition of programmed cell death by converting the toxic proline catabolism intermediate (s)-1-pyrroline-5-carboxylate (P5C) to glutamate. This chain is Delta-1-pyrroline-5-carboxylate dehydrogenase 12A1, mitochondrial, found in Arabidopsis thaliana (Mouse-ear cress).